Consider the following 103-residue polypeptide: Thioredoxin (103 aa).

Residues 1–103 (MVKEITDATF…ELDEVINKYV (103 aa)) form the Thioredoxin domain. A disulfide bridge connects residues Cys-28 and Cys-31.

The protein belongs to the thioredoxin family.

Functionally, component of the thioredoxin-thioredoxin reductase system. Participates in various redox reactions through the reversible oxidation of its active center dithiol to a disulfide and catalyzes dithiol-disulfide exchange reactions. The protein is Thioredoxin (trxA) of Listeria innocua serovar 6a (strain ATCC BAA-680 / CLIP 11262).